Consider the following 417-residue polypeptide: MPYKVKDISLAPQGEKKIRWVQEHMPVLERIKSDFSEEKPFKGVTIGSCLHLEPKTINLGLTLQAGGAEVAMTGCNPLSTQDDATAAGAKMGLNMYGWRGETNEEYYENIHRVLDHEPEILIDDGADMIFLVHRERPELLDGIIGACEETTTGINRLRAMAADGALKFPVMAVNDAYTKYLFDNRYGTGQSTFDSIMGTTNMLIAGKTVVVCGYGWCGRGIAMRAEGLGASVIVTEVDPIRALEARMDGFRVMKVSDAVKEADILITATGNTDVVSESEFMNMKDGCVMANSGHFNVEINREALEELSRETGKVKEDIEVFIMPDGRKIYLLAEGRLVNLASERGQGHPAEIMDMSFAMQALSARHLLQEKPDPGVYRAPDEIDLMVARMKLDAMGIEIDELTEKQRLYLENWEEGT.

2 residues coordinate substrate: D124 and E149. Residue 150-152 coordinates NAD(+); it reads TTT. The substrate site is built by K179 and D183. NAD(+) is bound by residues N184, 213 to 218, E236, N271, 292 to 294, and N339; these read GYGWCG and SGH.

Belongs to the adenosylhomocysteinase family. NAD(+) is required as a cofactor.

It is found in the cytoplasm. It catalyses the reaction S-inosyl-L-homocysteine + H2O = L-homocysteine + inosine. Its pathway is amino-acid biosynthesis; S-adenosyl-L-methionine biosynthesis. Its function is as follows. Catalyzes the hydrolysis of S-inosyl-L-homocysteine (SIH) to L-homocysteine (Hcy) and inosine. Likely functions in a S-adenosyl-L-methionine (SAM) recycling pathway from S-adenosyl-L-homocysteine (SAH) produced from SAM-dependent methylation reactions. Can also catalyze the reverse reaction in vitro, i.e. the synthesis of SIH from Hcy and inosine. The chain is S-inosyl-L-homocysteine hydrolase from Methanothermobacter thermautotrophicus (strain ATCC 29096 / DSM 1053 / JCM 10044 / NBRC 100330 / Delta H) (Methanobacterium thermoautotrophicum).